We begin with the raw amino-acid sequence, 380 residues long: Probable G-protein coupled receptor 132 (380 aa).

The Extracellular portion of the chain corresponds to 1 to 45 (MCPMLLKNGYNGNATPVTTTAPWASLGLSAKTCNNVSFEESRIVL). N-linked (GlcNAc...) asparagine glycosylation is present at N35. Residues 46–68 (VVVYSAVCTLGVPANCLTAWLAL) traverse the membrane as a helical segment. The Cytoplasmic portion of the chain corresponds to 69–79 (LQVLQGNVLAV). Residues 80–102 (YLLCLALCELLYTGTLPLWVIYI) traverse the membrane as a helical segment. Over 103–116 (RNQHRWTLGLLACK) the chain is Extracellular. C115 and C186 are joined by a disulfide. Residues 117–138 (VTAYIFFCNIYVSILFLCCISC) form a helical membrane-spanning segment. At 139 to 158 (DRFVAVVYALESRGRRRRRT) the chain is on the cytoplasmic side. The chain crosses the membrane as a helical span at residues 159–178 (AILISACIFILVGIVHYPVF). Over 179–197 (QTEDKETCFDMLQMDSRIA) the chain is Extracellular. The chain crosses the membrane as a helical span at residues 198 to 220 (GYYYARFTVGFAIPLSIIAFTNH). At 221 to 246 (RIFRSIKQSMGLSAAQKAKVKHSAIA) the chain is on the cytoplasmic side. Residues 247–269 (VVVIFLVCFAPYHLVLLVKAAAF) traverse the membrane as a helical segment. The Extracellular segment spans residues 270 to 288 (SYYRGDRNAMCGLEERLYT). The chain crosses the membrane as a helical span at residues 289–311 (ASVVFLCLSTVNGVADPIIYVLA). The Cytoplasmic segment spans residues 312–380 (TDHSRQEVSR…PAKRLIEESC (69 aa)).

It belongs to the G-protein coupled receptor 1 family. In terms of tissue distribution, highly expressed in macrophages and hematopoietic tissues rich in lymphocytes, like spleen and thymus. Weakly expressed in heart and lung. In atherosclerotic plaques, expression is observed around the lipid core and at the shoulder region.

It localises to the cell membrane. In terms of biological role, may be a receptor for oxidized free fatty acids derived from linoleic and arachidonic acids such as 9-hydroxyoctadecadienoic acid (9-HODE). Activates a G alpha protein, most likely G alpha(q). May be involved in apoptosis. Functions at the G2/M checkpoint to delay mitosis. May function as a sensor that monitors the oxidative states and mediates appropriate cellular responses such as secretion of paracrine signals and attenuation of proliferation. May mediate ths accumulation of intracellular inositol phosphates at acidic pH through proton-sensing activity. The sequence is that of Probable G-protein coupled receptor 132 (GPR132) from Homo sapiens (Human).